A 111-amino-acid polypeptide reads, in one-letter code: MDDSREESQFIVDDVSKTIKEAIETTIGGNAYQHDKVNNWTGQVVENCLTVLTKEQKPYKYIVTAMIMQKNGAGLHTASSCYWNNDTDGSCTVRWENKTMYCIVSVFGLAV.

The protein belongs to the dynein light chain Tctex-type family. The cytoplasmic dynein complex consists of two catalytic heavy chains (HCs) and a number of non-catalytic subunits presented by intermediate chains (ICs), light intermediate chains (LICs) and light chains (LCs).

It is found in the cytoplasm. The protein resides in the cytoskeleton. In terms of biological role, acts as one of several non-catalytic accessory components of the cytoplasmic dynein complex that are thought to be involved in linking dynein to cargos and to adapter proteins that regulate dynein function. Cytoplasmic dynein acts as a motor for the intracellular retrograde motility of vesicles and organelles along microtubules. Required for spermatid differentiation. Is not required for polarized transport in rhabdomere development and appears to be a non-essential component of the cytoplasmic dynein complex. The protein is Dynein light chain Tctex-type (Dlc90F) of Drosophila melanogaster (Fruit fly).